The sequence spans 550 residues: Putative golgin subfamily A member 6-like protein 19 (550 aa).

Over residues 1–11 the composition is skewed to pro residues; sequence MWPQPRLPPHP. A disordered region spans residues 1–77; that stretch reads MWPQPRLPPH…DSATGVYGEG (77 aa). Residues 51-62 show a composition bias toward polar residues; it reads NGSSPDTATSGG. Positions 157–405 form a coiled coil; it reads SKVEQLQDET…QERLRQQDER (249 aa). Basic and acidic residues predominate over residues 467–480; that stretch reads KELEKSGGAEEPRG. Residues 467-529 are disordered; the sequence is KELEKSGGAE…VGTGEAAGGA (63 aa). 2 stretches are compositionally biased toward low complexity: residues 484–499 and 517–529; these read AAAA…PQGA and GEAV…AGGA.

Belongs to the GOLGA6 family.

The chain is Putative golgin subfamily A member 6-like protein 19 (GOLGA6L19) from Homo sapiens (Human).